The sequence spans 180 residues: Cell division protein SepF (180 aa).

The segment at 14 to 81 (NSEDDEEFDN…SKITPISKSS (68 aa)) is disordered. Residues 15–35 (SEDDEEFDNEDYYLDDEEEEE) show a composition bias toward acidic residues. A compositionally biased stretch (basic and acidic residues) spans 57 to 68 (TRRDTTPKEKPV). Over residues 69–79 (KTTSKITPISK) the composition is skewed to low complexity.

It belongs to the SepF family. In terms of assembly, homodimer. Interacts with FtsZ.

It localises to the cytoplasm. Cell division protein that is part of the divisome complex and is recruited early to the Z-ring. Probably stimulates Z-ring formation, perhaps through the cross-linking of FtsZ protofilaments. Its function overlaps with FtsA. This chain is Cell division protein SepF, found in Agathobacter rectalis (strain ATCC 33656 / DSM 3377 / JCM 17463 / KCTC 5835 / VPI 0990) (Eubacterium rectale).